The sequence spans 275 residues: Large ribosomal subunit protein uL2 (275 aa).

The interval 223–260 (VAMNPVDHPHGGGEGRTSGGRHPVSPWGLPTKGYKTRS) is disordered.

This sequence belongs to the universal ribosomal protein uL2 family. In terms of assembly, part of the 50S ribosomal subunit. Forms a bridge to the 30S subunit in the 70S ribosome.

Its function is as follows. One of the primary rRNA binding proteins. Required for association of the 30S and 50S subunits to form the 70S ribosome, for tRNA binding and peptide bond formation. It has been suggested to have peptidyltransferase activity; this is somewhat controversial. Makes several contacts with the 16S rRNA in the 70S ribosome. The sequence is that of Large ribosomal subunit protein uL2 from Legionella pneumophila (strain Lens).